Here is a 31-residue protein sequence, read N- to C-terminus: Cytochrome b6-f complex subunit 6 (31 aa).

A helical transmembrane segment spans residues 4–26 (ITSYFGFLLTALTITSALFIGLS).

Belongs to the PetL family. The 4 large subunits of the cytochrome b6-f complex are cytochrome b6, subunit IV (17 kDa polypeptide, PetD), cytochrome f and the Rieske protein, while the 4 small subunits are PetG, PetL, PetM and PetN. The complex functions as a dimer.

The protein resides in the plastid. The protein localises to the chloroplast thylakoid membrane. Its function is as follows. Component of the cytochrome b6-f complex, which mediates electron transfer between photosystem II (PSII) and photosystem I (PSI), cyclic electron flow around PSI, and state transitions. PetL is important for photoautotrophic growth as well as for electron transfer efficiency and stability of the cytochrome b6-f complex. This chain is Cytochrome b6-f complex subunit 6, found in Lactuca sativa (Garden lettuce).